The chain runs to 334 residues: MGNCLKCFQSAAEQSMPTNASSPNSHNSNSNACQTATSLANCYESVGINPNANERCALETDELLSSRTPLKPAKANNCDTKRNSFKSLGLLNGSAPTMSDIITTAVQESMEVSHQTLSKLFDVYKDPDDEEMILTDGIERLCNDLNYQPDEFAILVLAWCLDASQMCRFTKVEFIEGLHKMRADTIDSIRVRLEQTIEMLKADAEMFKQLYRFTFRFGLEPDQRVLSLEMAIDLWKLVFTVQTPDLFSNWIHFLEKHPNIRRIPKDTWNMYLNFTEQCDIQNYDDTEAWPSLFDDFVDYEKSRALVSSGIHDDDNNNDDPLQSHVKAEDPGLVS.

A DCUN1 domain is found at Val-112–Lys-301. The interval Ser-308–Ser-334 is disordered. Residues Val-325–Ser-334 show a composition bias toward basic and acidic residues.

It is found in the cell membrane. Functionally, promotes neddylation of cullin components of SCF-type E3 ubiquitin ligase complexes and thus regulates SCF-type complex activity. Function promotes cell proliferation. This is DCN1-like protein 3 from Drosophila melanogaster (Fruit fly).